A 389-amino-acid chain; its full sequence is Succinate--CoA ligase [ADP-forming] subunit beta (389 aa).

The ATP-grasp domain occupies 9–244; it reads KEIFRSMGVA…LDEEDPKEIE (236 aa). Residues lysine 46, 53–55, glutamate 99, cysteine 102, and glutamate 107 each bind ATP; that span reads GRG. Positions 199 and 213 each coordinate Mg(2+). Residues asparagine 264 and 321 to 323 contribute to the substrate site; that span reads GIM.

This sequence belongs to the succinate/malate CoA ligase beta subunit family. In terms of assembly, heterotetramer of two alpha and two beta subunits. Requires Mg(2+) as cofactor.

It catalyses the reaction succinate + ATP + CoA = succinyl-CoA + ADP + phosphate. The catalysed reaction is GTP + succinate + CoA = succinyl-CoA + GDP + phosphate. It functions in the pathway carbohydrate metabolism; tricarboxylic acid cycle; succinate from succinyl-CoA (ligase route): step 1/1. Its function is as follows. Succinyl-CoA synthetase functions in the citric acid cycle (TCA), coupling the hydrolysis of succinyl-CoA to the synthesis of either ATP or GTP and thus represents the only step of substrate-level phosphorylation in the TCA. The beta subunit provides nucleotide specificity of the enzyme and binds the substrate succinate, while the binding sites for coenzyme A and phosphate are found in the alpha subunit. This Macrococcus caseolyticus (strain JCSC5402) (Macrococcoides caseolyticum) protein is Succinate--CoA ligase [ADP-forming] subunit beta.